A 346-amino-acid polypeptide reads, in one-letter code: Enoyl-[acyl-carrier-protein] reductase, mitochondrial (346 aa).

The N-terminal 22 residues, 1–22 (MQKTIRSQALIYRKFGDPLKVL), are a transit peptide targeting the mitochondrion. The Proton donor role is filled by Tyr-59. NADP(+)-binding positions include Asn-131, 157 to 160 (NSGV), 180 to 182 (RNR), 249 to 252 (YGGM), 274 to 276 (VAV), and Lys-332.

This sequence belongs to the zinc-containing alcohol dehydrogenase family. Quinone oxidoreductase subfamily. As to quaternary structure, homodimer.

It localises to the mitochondrion. It catalyses the reaction a 2,3-saturated acyl-[ACP] + NADP(+) = a (2E)-enoyl-[ACP] + NADPH + H(+). Functionally, catalyzes the NADPH-dependent reduction of trans-2-enoyl thioesters in mitochondrial fatty acid synthesis (fatty acid synthesis type II). Fatty acid chain elongation in mitochondria uses acyl carrier protein (ACP) as an acyl group carrier, but the enzyme accepts both ACP and CoA thioesters as substrates in vitro. May provide the octanoyl chain used for lipoic acid biosynthesis, regulating protein lipoylation and mitochondrial respiratory activity. Involved in iron homeostasis; affecting Fe-S cluster assembly and ceramide metabolism. Required for proper morphology and bioenergetic functions of mitochondria. Required for maintenance of neurons. In Caenorhabditis elegans, this protein is Enoyl-[acyl-carrier-protein] reductase, mitochondrial.